We begin with the raw amino-acid sequence, 320 residues long: MELLESKPLSAISMVIDSIGVDHDSQNKCNCCNEQIYDRFIYRMDNHSYHENCVKCTICESPLAEKCFWKNGRIYCSQHYYKDHSSHRCAGCKKGVSPTDMVYKLKAGLVFHVECHCCSLCGRHLSPGEQILVDDTMMTVSCMTHYPPQMDDSCGPPAGTSEVPSCSSDSAIAPYPMDEGFPSAFQVKKEVDAYGYNFEHYSFSDFCDDDSRMLKRRGPRTTIKQNQLDVLNEMFSNTPKPSKHARAKKALETGLSMRVIQVWFQNRRSKERRLKHLCNYLRHYEQRGLIPPPIHFRNEEMDTTDFNSFCGNFEEEDDED.

LIM zinc-binding domains are found at residues 29-79 and 89-145; these read CNCC…CSQH and CAGC…CMTH. The segment at residues 216–275 is a DNA-binding region (homeobox); sequence RRGPRTTIKQNQLDVLNEMFSNTPKPSKHARAKKALETGLSMRVIQVWFQNRRSKERRLK.

It localises to the nucleus. Specifies differentiation of the set of six touch receptor neurons. Binds cooperatively as a heterodimer with unc-86 to sites in the mec-3 gene promoter. This chain is Mechanosensory protein 3 (mec-3), found in Caenorhabditis remanei (Caenorhabditis vulgaris).